Here is a 197-residue protein sequence, read N- to C-terminus: Pyridoxal 5'-phosphate synthase subunit PdxT (197 aa).

53–55 (GES) contributes to the L-glutamine binding site. Cys85 (nucleophile) is an active-site residue. Residues Arg114 and 142-143 (IR) contribute to the L-glutamine site. Active-site charge relay system residues include His179 and Glu181.

It belongs to the glutaminase PdxT/SNO family. In the presence of PdxS, forms a dodecamer of heterodimers. Only shows activity in the heterodimer.

It catalyses the reaction aldehydo-D-ribose 5-phosphate + D-glyceraldehyde 3-phosphate + L-glutamine = pyridoxal 5'-phosphate + L-glutamate + phosphate + 3 H2O + H(+). The enzyme catalyses L-glutamine + H2O = L-glutamate + NH4(+). Its pathway is cofactor biosynthesis; pyridoxal 5'-phosphate biosynthesis. Functionally, catalyzes the hydrolysis of glutamine to glutamate and ammonia as part of the biosynthesis of pyridoxal 5'-phosphate. The resulting ammonia molecule is channeled to the active site of PdxS. The polypeptide is Pyridoxal 5'-phosphate synthase subunit PdxT (Thermococcus kodakarensis (strain ATCC BAA-918 / JCM 12380 / KOD1) (Pyrococcus kodakaraensis (strain KOD1))).